The following is a 115-amino-acid chain: NADH-ubiquinone oxidoreductase chain 3 (115 aa).

Helical transmembrane passes span valine 3 to tryptophan 23, phenylalanine 55 to leucine 75, and leucine 84 to tyrosine 104.

It belongs to the complex I subunit 3 family. Core subunit of respiratory chain NADH dehydrogenase (Complex I) which is composed of 45 different subunits. Interacts with TMEM186. Interacts with TMEM242.

Its subcellular location is the mitochondrion inner membrane. The catalysed reaction is a ubiquinone + NADH + 5 H(+)(in) = a ubiquinol + NAD(+) + 4 H(+)(out). Functionally, core subunit of the mitochondrial membrane respiratory chain NADH dehydrogenase (Complex I) which catalyzes electron transfer from NADH through the respiratory chain, using ubiquinone as an electron acceptor. Essential for the catalytic activity of complex I. The polypeptide is NADH-ubiquinone oxidoreductase chain 3 (Canis lupus familiaris (Dog)).